A 413-amino-acid chain; its full sequence is MDHLKRQDEKVFAAIEAELGRQRSKIELIASENFVSEAVMEAQGSVLTNKYAEGYPGKRYYGGCEHVDVVEDIARDRVKEIFGAEHVNVQPHSGAQANMAVYFTILEHGDTVLGMNLSHGGHLTHGSPVNFSGVQYNFVEYGVDAETHRINYDDVLAKAKEHKPKLIVAGASAYPRVIDFKRFREIADEVGAYLMVDMAHIAGLVAAGLHPNPVPHAHFVTTTTHKTLRGPRGGMILCEEKFAKQIDKSIFPGIQGGPLMHVIAAKAVAFGEALQDDFKTYAQNIIHNAQRLAEGLQKEGLTLVSGGTDNHLILIDVRNLNITGKVAEHVLDEVGITVNKNTIPFETASPFVTSGVRIGTAAVTSRGFGLEEMDEIASIIAHTLKNHEDETALEEARKRVAVLTSKFPMYTDL.

(6S)-5,6,7,8-tetrahydrofolate contacts are provided by residues leucine 117 and 121-123; that span reads GHL. An N6-(pyridoxal phosphate)lysine modification is found at lysine 226. (6S)-5,6,7,8-tetrahydrofolate-binding positions include glutamate 239 and 349–351; that span reads SPF.

The protein belongs to the SHMT family. Homodimer. Pyridoxal 5'-phosphate is required as a cofactor.

It localises to the cytoplasm. The catalysed reaction is (6R)-5,10-methylene-5,6,7,8-tetrahydrofolate + glycine + H2O = (6S)-5,6,7,8-tetrahydrofolate + L-serine. It participates in one-carbon metabolism; tetrahydrofolate interconversion. Its pathway is amino-acid biosynthesis; glycine biosynthesis; glycine from L-serine: step 1/1. Its function is as follows. Catalyzes the reversible interconversion of serine and glycine with tetrahydrofolate (THF) serving as the one-carbon carrier. This reaction serves as the major source of one-carbon groups required for the biosynthesis of purines, thymidylate, methionine, and other important biomolecules. Also exhibits THF-independent aldolase activity toward beta-hydroxyamino acids, producing glycine and aldehydes, via a retro-aldol mechanism. This Bacillus cytotoxicus (strain DSM 22905 / CIP 110041 / 391-98 / NVH 391-98) protein is Serine hydroxymethyltransferase.